The chain runs to 184 residues: Large ribosomal subunit protein bL9 (184 aa).

The disordered stretch occupies residues 160-184 (LQNQKSEQQEAEQDANKEATDGDDS). Positions 173-184 (DANKEATDGDDS) are enriched in basic and acidic residues.

Belongs to the bacterial ribosomal protein bL9 family.

Functionally, binds to the 23S rRNA. The sequence is that of Large ribosomal subunit protein bL9 from Wolbachia pipientis wMel.